The chain runs to 426 residues: Serine--tRNA ligase (426 aa).

227–229 (TSE) lines the L-serine pocket. ATP-binding positions include 258 to 260 (RKE) and Val274. L-serine is bound at residue Glu281. 345 to 348 (ELTS) contacts ATP. Thr380 is a binding site for L-serine.

This sequence belongs to the class-II aminoacyl-tRNA synthetase family. Type-1 seryl-tRNA synthetase subfamily. As to quaternary structure, homodimer. The tRNA molecule binds across the dimer.

The protein localises to the cytoplasm. It carries out the reaction tRNA(Ser) + L-serine + ATP = L-seryl-tRNA(Ser) + AMP + diphosphate + H(+). The catalysed reaction is tRNA(Sec) + L-serine + ATP = L-seryl-tRNA(Sec) + AMP + diphosphate + H(+). The protein operates within aminoacyl-tRNA biosynthesis; selenocysteinyl-tRNA(Sec) biosynthesis; L-seryl-tRNA(Sec) from L-serine and tRNA(Sec): step 1/1. Functionally, catalyzes the attachment of serine to tRNA(Ser). Is also able to aminoacylate tRNA(Sec) with serine, to form the misacylated tRNA L-seryl-tRNA(Sec), which will be further converted into selenocysteinyl-tRNA(Sec). The chain is Serine--tRNA ligase from Clavibacter sepedonicus (Clavibacter michiganensis subsp. sepedonicus).